We begin with the raw amino-acid sequence, 360 residues long: S-adenosylmethionine:tRNA ribosyltransferase-isomerase (360 aa).

The protein belongs to the QueA family. Monomer.

The protein resides in the cytoplasm. The catalysed reaction is 7-aminomethyl-7-carbaguanosine(34) in tRNA + S-adenosyl-L-methionine = epoxyqueuosine(34) in tRNA + adenine + L-methionine + 2 H(+). The protein operates within tRNA modification; tRNA-queuosine biosynthesis. Its function is as follows. Transfers and isomerizes the ribose moiety from AdoMet to the 7-aminomethyl group of 7-deazaguanine (preQ1-tRNA) to give epoxyqueuosine (oQ-tRNA). This is S-adenosylmethionine:tRNA ribosyltransferase-isomerase from Rhodopseudomonas palustris (strain ATCC BAA-98 / CGA009).